Consider the following 470-residue polypeptide: Cell division protein FtsP (470 aa).

A signal peptide (tat-type signal) is located at residues 1-27 (MSLSRRQFIQASGIALCAGAVPLKASA). Positions 229–287 (VRLRLLNASNSRRYQLQMSDGRPLHVISGDQGFLPAPVSVKQLSLAPGERREILVDMSN) constitute a Plastocyanin-like domain.

The protein belongs to the FtsP family. Post-translationally, predicted to be exported by the Tat system. The position of the signal peptide cleavage has not been experimentally proven.

It is found in the periplasm. Functionally, cell division protein that is required for growth during stress conditions. May be involved in protecting or stabilizing the divisomal assembly under conditions of stress. The chain is Cell division protein FtsP from Shigella dysenteriae serotype 1 (strain Sd197).